The primary structure comprises 1415 residues: MVEDEEINDQISEEEEEKKKNNDSDEEMKDIDEEEEEEEEEEEEEEEEEKEEEEEEEEEETPKKPMPPPQSKAKPSSQPPDIKKASQQSQTQKNTPPPIQTSQSSQSSQSSQSSQQQQPKNISQTQQPKNTPPLQSSQTSQTSQKTPVSSNNGIEKRLMITKMVMENFKSYAGAQEVGPFHKCFSSVVGPNGSGKSNVIDAMLFVFGYRAKQIRLNKISELIHNSENHKNLTNGRVSVHFQEIIDLPGEDNYEVVKGSEFVVTRTAQKTGNNKDGVSKYYLNDKVVKLDDLKTILKDKGIDLDNNRFLILQGEVEQIAMMKPKGVHPGEEGLLEYLEDIIGSKKYLPDIEATSKLIEDIGDKRTSSNNRMKVVEKEKDALQQERDNALEYIDKELKLIHCKSIHYQIGRSKPEREKNEIAAKQEMVEKQLEQELVTQKASNDKLLEFEKNLKQQNKQLDELNKQMAKCKNELLTTEKKGVKYKEETKHLKTKVKKNNSVIEEETKKQAEFERSTIIHKQDIVRFEKEYVELPKELIVEEKKLESMLNSLKGEVTELQREMEEKQKQLLPWSKKHSEAKAVVDLKTSELAVLSKDFNGATQNLDDAIKALEDAKTISSTRKNNITKSKKELESVKAIIVDLEKRLASGKVTEENLYRNTMDAKRQLEQIKTNLSENSSRNTILDRLLKIKESGQISGIHGRLGDLGAIDQKYDVAISTAAFSQMDNIIVETTAAAEACVELLRKENLGRATFMILENLEYQRQNLGPVQTPNNTPRLFDLIKMKDEKKYATAFFTAVGHTLVADTLDEATKIAYGAKRHRVVTLDGSLIDTSGAMSGGGLKPRVGAMNSKLKGDPKEDKKKLIELQDNLSQLDSDLRQCRDELVEIENQIQQAQNRRSELELELPKMDMDIKAAITKCEELTKVIPQLKNKAKLSTEKKEQIDSIKESLIVDQKSLDKVQEKVNKLESEVQEIQNSILNVGGPQLKMQKNKVESLQSRIDSNQTNTTKANVQIKSLAKSMEKSIKILNENTKEKDENEAALAEILEKYKSLEKENLKATEAMEAVSEQLREKEEETKEIRKEHEKAKKVIEKIKVSNSKLETQIEEFKTLINEKQAEIADCLSKFANQAKKAKIYKDYVDESLINQVSAILTPEEIEQYMEATEQQNLIAKIHELTTQIQKISKENNVNIEVVKDFQKKEQEYHSRKAEFDEIEKERDNLSKRYESLRKNRLDEFMAGFTIITMKLKEIYQMITLGGDAELEIIDREDPFQEGISFSVRPPKKSWKNISNLSGGEKTLSSLALVFALHHYKPNALYVMDEIDAALDFKNVSIIANYIKERTKNAQFIIISLRNYMFELADRLVGIYKTDNCTKSVTINPNSFTSLSTTTTTTNNSQQQQQQKQQQKQQQQNSTSQK.

2 stretches are compositionally biased toward acidic residues: residues 1–16 (MVED…EEEE) and 24–60 (SDEE…EEEE). Positions 1-154 (MVEDEEINDQ…KTPVSSNNGI (154 aa)) are disordered. 2 stretches are compositionally biased toward low complexity: residues 71–80 (SKAKPSSQPP) and 100–150 (QTSQ…PVSS). Residue 189 to 196 (GPNGSGKS) participates in ATP binding. 2 coiled-coil regions span residues 361-479 (DKRT…EKKG) and 533-675 (KELI…LSEN). Residues 695–812 (SGIHGRLGDL…DTLDEATKIA (118 aa)) form the SMC hinge domain. Coiled-coil stretches lie at residues 855–1120 (KEDK…IADC) and 1162–1233 (TEQQ…RLDE). A disordered region spans residues 1385–1415 (STTTTTTNNSQQQQQQKQQQKQQQQNSTSQK). A compositionally biased stretch (low complexity) spans 1386–1415 (TTTTTTNNSQQQQQQKQQQKQQQQNSTSQK).

The protein belongs to the SMC family. SMC4 subfamily. Forms a heterodimer with smc2. Component of the condensin complex, which contains the smc2-smc4 heterodimer.

It is found in the nucleus. In terms of biological role, central component of the condensin complex, a complex required for conversion of interphase chromatin into mitotic-like condense chromosomes. The condensin complex probably introduces positive supercoils into relaxed DNA in the presence of type I topoisomerases and converts nicked DNA into positive knotted forms in the presence of type II topoisomerases. The chain is Structural maintenance of chromosomes protein 4 (smc4) from Dictyostelium discoideum (Social amoeba).